The chain runs to 221 residues: Keratin-associated protein 10-3 (221 aa).

Tandem repeats lie at residues 26–30, 31–35, 36–40, 57–61, 79–83, 89–93, 99–103, 104–108, 109–113, 114–118, 119–123, 124–128, 136–140, 146–150, 151–155, 177–181, 188–192, and 210–214. Residues 26–214 form an 18 X 5 AA repeats of C-C-X(3) region; sequence CCEPPCCATS…RLSSACCGLS (189 aa).

This sequence belongs to the KRTAP type 10 family. In terms of assembly, interacts with hair keratins. In terms of tissue distribution, restricted to a narrow region of the hair fiber cuticle, lying approximately 20 cell layers above the apex of the dermal papilla of the hair root; not detected in any other tissues.

Functionally, in the hair cortex, hair keratin intermediate filaments are embedded in an interfilamentous matrix, consisting of hair keratin-associated proteins (KRTAP), which are essential for the formation of a rigid and resistant hair shaft through their extensive disulfide bond cross-linking with abundant cysteine residues of hair keratins. The matrix proteins include the high-sulfur and high-glycine-tyrosine keratins. This is Keratin-associated protein 10-3 (KRTAP10-3) from Homo sapiens (Human).